The chain runs to 390 residues: GTPase Obg (390 aa).

In terms of domain architecture, Obg spans 1-159 (MKFVDEASIL…RELLLELMLL (159 aa)). A disordered region spans residues 127–147 (NTRFKSSVNRTPRQKTNGTPG). The segment covering 129 to 145 (RFKSSVNRTPRQKTNGT) has biased composition (polar residues). The OBG-type G domain maps to 160–333 (ADVGMLGMPN…LCWDVMTFII (174 aa)). Residues 166-173 (GMPNAGKS), 191-195 (FTTLV), 213-216 (DIPG), 283-286 (NKID), and 314-316 (SAA) contribute to the GTP site. The Mg(2+) site is built by serine 173 and threonine 193.

This sequence belongs to the TRAFAC class OBG-HflX-like GTPase superfamily. OBG GTPase family. Monomer. It depends on Mg(2+) as a cofactor.

Its subcellular location is the cytoplasm. In terms of biological role, an essential GTPase which binds GTP, GDP and possibly (p)ppGpp with moderate affinity, with high nucleotide exchange rates and a fairly low GTP hydrolysis rate. Plays a role in control of the cell cycle, stress response, ribosome biogenesis and in those bacteria that undergo differentiation, in morphogenesis control. The sequence is that of GTPase Obg from Escherichia coli O157:H7.